Reading from the N-terminus, the 492-residue chain is Protein nucleotidyltransferase YdiU (492 aa).

The ATP site is built by glycine 101, glycine 103, arginine 104, lysine 124, aspartate 136, glycine 137, arginine 187, and arginine 194. The active-site Proton acceptor is aspartate 268. Residues asparagine 269 and aspartate 278 each contribute to the Mg(2+) site. Residue aspartate 278 participates in ATP binding.

It belongs to the SELO family. The cofactor is Mg(2+). It depends on Mn(2+) as a cofactor.

The catalysed reaction is L-seryl-[protein] + ATP = 3-O-(5'-adenylyl)-L-seryl-[protein] + diphosphate. The enzyme catalyses L-threonyl-[protein] + ATP = 3-O-(5'-adenylyl)-L-threonyl-[protein] + diphosphate. It carries out the reaction L-tyrosyl-[protein] + ATP = O-(5'-adenylyl)-L-tyrosyl-[protein] + diphosphate. It catalyses the reaction L-histidyl-[protein] + UTP = N(tele)-(5'-uridylyl)-L-histidyl-[protein] + diphosphate. The catalysed reaction is L-seryl-[protein] + UTP = O-(5'-uridylyl)-L-seryl-[protein] + diphosphate. The enzyme catalyses L-tyrosyl-[protein] + UTP = O-(5'-uridylyl)-L-tyrosyl-[protein] + diphosphate. In terms of biological role, nucleotidyltransferase involved in the post-translational modification of proteins. It can catalyze the addition of adenosine monophosphate (AMP) or uridine monophosphate (UMP) to a protein, resulting in modifications known as AMPylation and UMPylation. This Corynebacterium efficiens (strain DSM 44549 / YS-314 / AJ 12310 / JCM 11189 / NBRC 100395) protein is Protein nucleotidyltransferase YdiU.